Here is a 183-residue protein sequence, read N- to C-terminus: Non-specific lipid transfer protein GPI-anchored 15 (183 aa).

Residues 1–24 (MGYRRSYAITFVALVAALWSVTKA) form the signal peptide. 4 disulfides stabilise this stretch: Cys30/Cys71, Cys40/Cys55, Cys56/Cys97, and Cys69/Cys107. 2 N-linked (GlcNAc...) asparagine glycosylation sites follow: Asn47 and Asn86. Residues 108–158 (NAATGPTAQPPAPSPTEKTPDVTLTPTSLPGARSGVGGGSKTVPSVGTGSS) are disordered. The segment covering 149–158 (TVPSVGTGSS) has biased composition (polar residues). Ser158 carries GPI-anchor amidated serine lipidation. Residues 159 to 183 (SRNVDPLPLHFLMFAVLVVCTSSFL) constitute a propeptide, removed in mature form.

Belongs to the plant LTP family. As to expression, expressed in seedlings, preferentially in the endodermis of hypocotyls and roots. Also observed in siliques.

Its subcellular location is the cell membrane. Its function is as follows. Probable lipid transfer protein. This is Non-specific lipid transfer protein GPI-anchored 15 from Arabidopsis thaliana (Mouse-ear cress).